Reading from the N-terminus, the 523-residue chain is REST corepressor 2 (523 aa).

A disordered region spans residues 1–43 (MPSVMEKPSAGSGILSRSRAKTAPNGGQPHSEDDSSEEEHSHD). Residues 30-43 (HSEDDSSEEEHSHD) show a composition bias toward basic and acidic residues. 4 positions are modified to phosphoserine: Ser31, Ser35, Ser36, and Ser63. The ELM2 domain maps to 44 to 129 (SMIRVGTNYQ…KSLADLANFT (86 aa)). Lys88 is covalently cross-linked (Glycyl lysine isopeptide (Lys-Gly) (interchain with G-Cter in SUMO2)). The SANT 1 domain occupies 130–181 (PFPDEWTVEDKVLFEQAFGFHGKCFQRIQQMLPDKLIPSLVKYYYSWKKTRS). A disordered region spans residues 185–265 (VMDRQARRLG…RRRPPKGMYL (81 aa)). Phosphoserine is present on Ser202. Residues 248 to 260 (YRHHPLRTRRRPP) show a composition bias toward basic residues. The stretch at 283–314 (TLRGLDSQLISLKRQVQSMKQTNSSLRQALEG) forms a coiled coil. The SANT 2 domain maps to 327 to 378 (KFNSRWTTDEQLLAVQAIRRYGKDFGAIAEVIGNKTLTQVKTFFVSYRRRFN). Positions 387–523 (EAEQDGAPTA…AQLEPPAPSL (137 aa)) are disordered. The span at 432 to 459 (SVPPAPPPPPPPTSLSQPPPLLRPPLPT) shows a compositional bias: pro residues. Residues 460-482 (APTLLRQPPPLQQGRFLQPRLAP) are compositionally biased toward low complexity. An Asymmetric dimethylarginine modification is found at Arg479.

It belongs to the CoREST family.

The protein localises to the nucleus. In terms of biological role, may act as a component of a corepressor complex that represses transcription. The chain is REST corepressor 2 (Rcor2) from Rattus norvegicus (Rat).